Here is a 262-residue protein sequence, read N- to C-terminus: MSAPHLLIDAGNSRIKWALADAQRTLVASGAFGHTRDGGADPDWSALPHPQGAWISNVAGADVAARLDALLDAQWPALPRTTIRARAAQCGVTNGYTSPEQLGSDRWAGLIGARAAFPDEHLLIATFGTATTLEALRADGRFTGGLIAPGWALMMRALGTHTAQLPTLSTDIASGLLADARAEPFQIDTPRSLSAGCLYAQAGLIERACRDLAAAWQAPVRLVLAGGAADDVARALTLPHTRHDGLILSGLALIAAEGAARD.

9–16 (DAGNSRIK) provides a ligand contact to ATP. Substrate-binding positions include Tyr-96 and 103–106 (GSDR). The active-site Proton acceptor is the Asp-105. Thr-129 contacts ATP. A substrate-binding site is contributed by Thr-189.

Belongs to the type III pantothenate kinase family. Homodimer. It depends on NH4(+) as a cofactor. K(+) is required as a cofactor.

It localises to the cytoplasm. The catalysed reaction is (R)-pantothenate + ATP = (R)-4'-phosphopantothenate + ADP + H(+). It functions in the pathway cofactor biosynthesis; coenzyme A biosynthesis; CoA from (R)-pantothenate: step 1/5. Functionally, catalyzes the phosphorylation of pantothenate (Pan), the first step in CoA biosynthesis. This chain is Type III pantothenate kinase, found in Burkholderia vietnamiensis (strain G4 / LMG 22486) (Burkholderia cepacia (strain R1808)).